The sequence spans 202 residues: UPF0301 protein Meso_0753 (202 aa).

The protein belongs to the UPF0301 (AlgH) family.

The polypeptide is UPF0301 protein Meso_0753 (Chelativorans sp. (strain BNC1)).